A 1133-amino-acid polypeptide reads, in one-letter code: Roquin-1 (1133 aa).

7 residues coordinate Zn(2+): Cys14, Cys17, Cys33, His35, Cys38, Cys50, and Asp53. Residues 14 to 54 (CPICTQTFDETIRKPISLGCGHTVCKMCLNKLHRKACPFDQ) form an RING-type; degenerate zinc finger. Positions 89 to 173 (GVEDTKHYEE…RTVTELILQH (85 aa)) are HEPN-N. Positions 174 to 326 (QNPQQLSSNL…MQSIIDKLQT (153 aa)) are ROQ. Residues 327 to 396 (PASFAQSVQE…VVHGLVDYIQ (70 aa)) are HEPN-C. Residues 413-441 (KYKTYMCRDMKQRGGCPRGASCTFAHSQE) form a C3H1-type zinc finger. Residues Ser462, Ser531, Ser535, and Ser863 each carry the phosphoserine modification. A disordered region spans residues 505 to 542 (TQLIPRGTDPSYDSSLKPGKIDHLSSSAPGSPPDLLES). 3 disordered regions span residues 1000–1019 (NTLA…WPGM), 1058–1078 (NTSK…PAED), and 1094–1133 (QENI…SSAP). Positions 1007–1016 (QPPPPPPPKW) are enriched in pro residues. Over residues 1058 to 1070 (NTSKQAENGQPEP) the composition is skewed to polar residues. Residues 1096 to 1110 (NISLLSNKTSSLNLS) are compositionally biased toward low complexity. Ser1110 is modified (phosphoserine). Positions 1119-1133 (NNDSQRSGVTPSSAP) are enriched in polar residues.

Able to homodimerize. Interacts with DDX6 and EDC4. Interacts with CCR4-NOT deadenylase complex. Interacts with RC3H1; the interaction is RNA independent. Post-translationally, proteolytically cleaved after Arg-510 and Arg-579 by MALT1 in activated CD4(+) T cells; cleavage at Arg-510 and Arg-579 is critical for promoting RC3H1 degradation in response to T-cell receptor (TCR) stimulation, and hence is necessary for prolonging the stability of a set of mRNAs controlling Th17 cell differentiation. Widely expressed. Expressed at higher level in cerebellum, spleen, ovary and liver.

It localises to the cytoplasm. The protein localises to the P-body. The protein resides in the cytoplasmic granule. It catalyses the reaction S-ubiquitinyl-[E2 ubiquitin-conjugating enzyme]-L-cysteine + [acceptor protein]-L-lysine = [E2 ubiquitin-conjugating enzyme]-L-cysteine + N(6)-ubiquitinyl-[acceptor protein]-L-lysine.. The protein operates within protein modification; protein ubiquitination. Post-transcriptional repressor of mRNAs containing a conserved stem loop motif, called constitutive decay element (CDE), which is often located in the 3'-UTR, as in HMGXB3, ICOS, IER3, NFKBID, NFKBIZ, PPP1R10, TNF, TNFRSF4 and in many more mRNAs. Cleaves translationally inactive mRNAs harboring a stem-loop (SL), often located in their 3'-UTRs, during the early phase of inflammation in a helicase UPF1-independent manner. Binds to CDE and promotes mRNA deadenylation and degradation. This process does not involve miRNAs. In follicular helper T (Tfh) cells, represses of ICOS and TNFRSF4 expression, thus preventing spontaneous Tfh cell differentiation, germinal center B-cell differentiation in the absence of immunization and autoimmunity. In resting or LPS-stimulated macrophages, controls inflammation by suppressing TNF expression. Also recognizes CDE in its own mRNA and in that of paralogous RC3H2, possibly leading to feedback loop regulation. Recognizes and binds mRNAs containing a hexaloop stem-loop motif, called alternative decay element (ADE). Together with ZC3H12A, destabilizes TNFRSF4/OX40 mRNA by binding to the conserved stem loop structure in its 3'UTR. Able to interact with double-stranded RNA (dsRNA). miRNA-binding protein that regulates microRNA homeostasis. Enhances DICER-mediated processing of pre-MIR146a but reduces mature MIR146a levels through an increase of 3' end uridylation. Both inhibits ICOS mRNA expression and they may act together to exert the suppression. Acts as a ubiquitin E3 ligase. Pairs with E2 enzymes UBE2A, UBE2B, UBE2D2, UBE2F, UBE2G1, UBE2G2 and UBE2L3 and produces polyubiquitin chains. Shows the strongest activity when paired with UBE2N:UBE2V1 or UBE2N:UBE2V2 E2 complexes and generate both short and long polyubiquitin chains. The protein is Roquin-1 of Homo sapiens (Human).